Here is a 490-residue protein sequence, read N- to C-terminus: Muscarinic acetylcholine receptor M4 (490 aa).

Topologically, residues 1 to 42 (MHNLSAQPWQAKMANLTYDNVTLSNRSEVAIQPPTNYKTVEL) are extracellular. N-linked (GlcNAc...) asparagine glycosylation is found at Asn3, Asn15, Asn20, and Asn25. A helical membrane pass occupies residues 43 to 64 (VFIATVTGSLSLVTVVGNILVM). The Cytoplasmic portion of the chain corresponds to 65-78 (LSIKVNRQLQTVNN). A helical transmembrane segment spans residues 79–99 (YFLFSLACADLIIGVFSMNLY). Over 100 to 116 (TVYIIKGYWPLGAVVCD) the chain is Extracellular. Cys115 and Cys195 are oxidised to a cystine. Residues 117-138 (LWLALDYVVSNASVMNLLIISF) traverse the membrane as a helical segment. Residues 139–158 (DRYFCVTKPLTYPARRTTKM) are Cytoplasmic-facing. Residues 159 to 181 (AGLMIAAAWILSFILWAPAILFW) form a helical membrane-spanning segment. At 182 to 203 (QFIVGKRTVHERECYIQFLSNP) the chain is on the extracellular side. Residues 204 to 226 (AVTFGTAIAAFYLPVVIMTVLYI) form a helical membrane-spanning segment. Residues 227-412 (HISLASRSRV…AAREKKVTRT (186 aa)) are Cytoplasmic-facing. Basic residues predominate over residues 236–250 (VRRHKPESRKERKGK). The tract at residues 236–343 (VRRHKPESRK…HPRVNPTSKW (108 aa)) is disordered. A compositionally biased stretch (basic and acidic residues) spans 270 to 285 (RAVEVKEEVRNGKVDD). Polar residues-rich tracts occupy residues 287 to 296 (PSAQTEATGQ) and 304 to 314 (NESSTVSMTQT). The helical transmembrane segment at 413–433 (IFAILLAFILTWTPYNVMVLI) threads the bilayer. The Extracellular segment spans residues 434-447 (NTFCETCVPETVWS). Residues 448–467 (IGYWLCYVNSTINPACYALC) traverse the membrane as a helical segment. At 468–490 (NATFKKTFKHLLMCQYRNIGTAR) the chain is on the cytoplasmic side.

It belongs to the G-protein coupled receptor 1 family. Muscarinic acetylcholine receptor subfamily. CHRM4 sub-subfamily. As to expression, expressed in heart and brain.

The protein localises to the cell membrane. It localises to the postsynaptic cell membrane. In terms of biological role, the muscarinic acetylcholine receptor mediates various cellular responses, including inhibition of adenylate cyclase, breakdown of phosphoinositides and modulation of potassium channels through the action of G proteins. Primary transducing effect is inhibition of adenylate cyclase. May couple to multiple functional responses in cell lines. The chain is Muscarinic acetylcholine receptor M4 (CHRM4) from Gallus gallus (Chicken).